The sequence spans 1360 residues: Ubiquitin carboxyl-terminal hydrolase 19 (1360 aa).

Positions 1-46 (MSAGASATGPRRGPPGLEEATSKKKQKDRANLESKDGDARRVSLPR) are disordered. Residues 1 to 1333 (MSAGASATGP…TTPDEGCLRY (1333 aa)) are Cytoplasmic-facing. Residues 28 to 46 (DRANLESKDGDARRVSLPR) are compositionally biased toward basic and acidic residues. One can recognise a CS 1 domain in the interval 51–140 (KDELLLDWRQ…VPLLTWPSLL (90 aa)). Residues 163–239 (PIALEPGSEP…APSFLSDSAT (77 aa)) form a disordered region. Over residues 170 to 181 (SEPRRAKQEARN) the composition is skewed to basic and acidic residues. Residues 189–199 (GEVGSGAGPGT) are compositionally biased toward gly residues. S220 is modified (phosphoserine). The region spanning 322–424 (LAFVKNDSYE…RQSQRWGGLE (103 aa)) is the CS 2 domain. Residues 432-482 (VGGAKVAVPTGPTPLDSTPPGGGPHPLTGQEEARAVEKEKPKARSEDSGLD) form a disordered region. A compositionally biased stretch (basic and acidic residues) spans 462 to 478 (EEARAVEKEKPKARSED). Residues 539-1256 (TGLVNLGNTC…YAYVLFYRRR (718 aa)) enclose the USP domain. C548 serves as the catalytic Nucleophile. Positions 833, 836, 850, 853, 859, 863, 871, and 875 each coordinate Zn(2+). Residues 833–875 (CAACQRKQQSEEEKLKRCTRCYRVGYCNQFCQKTHWPDHKGLC) form an MYND-type zinc finger. Positions 965–988 (DTGAHRVWPPADRGPVPSTSGLSS) are disordered. Residue H1207 is the Proton acceptor of the active site. The span at 1259-1274 (PVERPPRASHSEHHPD) shows a compositional bias: basic and acidic residues. Positions 1259 to 1281 (PVERPPRASHSEHHPDLGPAAEA) are disordered. Residues 1334–1354 (FVLGTVAALVALVLNVFYPLV) form a helical membrane-spanning segment. At 1355-1360 (SQSRWR) the chain is on the lumenal side.

As to quaternary structure, interacts with RNF123. Interacts with BIRC2/c-IAP1, BIRC3/c-IAP2 and XIAP/BIRC4. Interacts with HIF1A (via N-terminus).

The protein localises to the endoplasmic reticulum membrane. It carries out the reaction Thiol-dependent hydrolysis of ester, thioester, amide, peptide and isopeptide bonds formed by the C-terminal Gly of ubiquitin (a 76-residue protein attached to proteins as an intracellular targeting signal).. In terms of biological role, deubiquitinating enzyme that regulates the degradation of various proteins by removing ubiquitin moieties, thereby preventing their proteasomal degradation. Stabilizes RNF123, which promotes CDKN1B degradation and contributes to cell proliferation. Decreases the levels of ubiquitinated proteins during skeletal muscle formation and acts to repress myogenesis. Modulates transcription of major myofibrillar proteins. Also involved in turnover of endoplasmic-reticulum-associated degradation (ERAD) substrates. Mechanistically, deubiquitinates and thereby stabilizes several E3 ligases involved in the ERAD pathway including SYVN1 or MARCHF6. Regulates the stability of other E3 ligases including BIRC2/c-IAP1 and BIRC3/c-IAP2 by preventing their ubiquitination. Required for cells to mount an appropriate response to hypoxia by rescuing HIF1A from degradation in a non-catalytic manner and by mediating the deubiquitination of FUNDC1. Attenuates mitochondrial damage and ferroptosis by targeting and stabilizing NADPH oxidase 4/NOX4. Negatively regulates TNF-alpha- and IL-1beta-triggered NF-kappa-B activation by hydrolyzing 'Lys-27'- and 'Lys-63'-linked polyubiquitin chains from MAP3K7. Modulates also the protein level and aggregation of polyQ-expanded huntingtin/HTT through HSP90AA1. In Mus musculus (Mouse), this protein is Ubiquitin carboxyl-terminal hydrolase 19 (Usp19).